The primary structure comprises 426 residues: Cuticle-degrading serine protease (426 aa).

A signal peptide spans 1–21 (MLTNGLISLLAIAGLATNAFA). A propeptide spanning residues 22–123 (GPIRKVSNAG…VEQDTVVTTY (102 aa)) is cleaved from the precursor. Residues 39-122 (KYIVVLKKGL…YVEQDTVVTT (84 aa)) enclose the Inhibitor I9 domain. The Peptidase S8 domain occupies 130-426 (TWGLDRISHE…TNHQVTIVAS (297 aa)). Asp164 functions as the Charge relay system in the catalytic mechanism. N-linked (GlcNAc...) asparagine glycosylation is present at Asn178. His200 acts as the Charge relay system in catalysis. Asn252 carries N-linked (GlcNAc...) asparagine glycosylation. Ser353 serves as the catalytic Charge relay system.

The protein belongs to the peptidase S8 family.

It is found in the secreted. Inhibited by PMSF, SSI, the peptide Phe-Val and by Phe, but not by EDTA. Hydrolyzes gelatin, casein, the chromogenic substrate azocoll and the cuticle of the nematode P.redivivus. Immobilizes P.redivivus. The chain is Cuticle-degrading serine protease from Orbilia oligospora (Nematode-trapping fungus).